Consider the following 428-residue polypeptide: Sarcosine reductase complex component B subunit alpha (428 aa).

At Cys242 the chain carries Pyruvic acid (Cys).

Heterotetramer of two alpha and two beta subunits. Component of the sarcosine reductase complex, together with components A and C. PB is substrate specific. In terms of processing, the peptide chain is cleaved into beta and alpha chains, and the alpha chain N-terminal cysteine is deaminated and oxidized to form a reactive pyruvoyl group.

It carries out the reaction acetyl phosphate + methylamine + [thioredoxin]-disulfide + H2O = sarcosine + [thioredoxin]-dithiol + phosphate + H(+). Its function is as follows. In the first step of sarcosine reductase, the substrate is bound to component PB via a Schiff base intermediate. Then the PB-activated substrate is nucleophilically attacked by the selenol anion of component PA to transform it to a carboxymethylated selenoether and the respective amine. By action of component PC, acetyl phosphate is formed, leaving component PA in its oxidized state. Finally component PA becomes reduced by the thioredoxin system to start a new catalytic cycle of reductive deamination. The sequence is that of Sarcosine reductase complex component B subunit alpha (grdG) from Peptoclostridium acidaminophilum (Eubacterium acidaminophilum).